The following is a 489-amino-acid chain: Ataxin-10 homolog (489 aa).

Belongs to the ataxin-10 family.

It localises to the cytoplasm. Functionally, may play a role in the regulation of cytokinesis. This chain is Ataxin-10 homolog (CTR86), found in Debaryomyces hansenii (strain ATCC 36239 / CBS 767 / BCRC 21394 / JCM 1990 / NBRC 0083 / IGC 2968) (Yeast).